The sequence spans 369 residues: Tyrosyl-DNA phosphodiesterase 2 (369 aa).

The span at 1-17 (MELEARAEPRSPRAGRG) shows a compositional bias: basic and acidic residues. Disordered regions lie at residues 1–26 (MELE…EDEE) and 80–117 (AAAA…QQDD). Low complexity predominate over residues 99 to 112 (DDTASNTSSSGADS). Positions 127 to 131 (NIDGL) are interaction with 5' end of substrate DNA. Residues Asp129 and Glu159 each coordinate Mg(2+). The interaction with 5' end of substrate DNA stretch occupies residues 233–238 (HLESTR). Asp269 functions as the Proton donor/acceptor in the catalytic mechanism. The interval 271–273 (NLR) is interaction with 5' end of substrate DNA.

It belongs to the CCR4/nocturin family. TTRAP/TDP2 subfamily. Mg(2+) serves as cofactor. It depends on Mn(2+) as a cofactor.

The protein localises to the nucleus. Its subcellular location is the PML body. Functionally, DNA repair enzyme that can remove a variety of covalent adducts from DNA through hydrolysis of a 5'-phosphodiester bond, giving rise to DNA with a free 5' phosphate. Catalyzes the hydrolysis of dead-end complexes between DNA and the topoisomerase 2 (TOP2) active site tyrosine residue. Hydrolyzes 5'-phosphoglycolates on protruding 5' ends on DNA double-strand breaks (DSBs) due to DNA damage by radiation and free radicals. The 5'-tyrosyl DNA phosphodiesterase activity can enable the repair of TOP2-induced DSBs without the need for nuclease activity, creating a 'clean' DSB with 5'-phosphate termini that are ready for ligation. Also has 3'-tyrosyl DNA phosphodiesterase activity, but less efficiently and much slower than TDP1. The protein is Tyrosyl-DNA phosphodiesterase 2 (TDP2) of Gallus gallus (Chicken).